The chain runs to 345 residues: Aspartate--ammonia ligase (345 aa).

Belongs to the class-II aminoacyl-tRNA synthetase family. AsnA subfamily.

It localises to the cytoplasm. The enzyme catalyses L-aspartate + NH4(+) + ATP = L-asparagine + AMP + diphosphate + H(+). It participates in amino-acid biosynthesis; L-asparagine biosynthesis; L-asparagine from L-aspartate (ammonia route): step 1/1. The polypeptide is Aspartate--ammonia ligase (Bacteroides thetaiotaomicron (strain ATCC 29148 / DSM 2079 / JCM 5827 / CCUG 10774 / NCTC 10582 / VPI-5482 / E50)).